Consider the following 364-residue polypeptide: Probable dual-specificity RNA methyltransferase RlmN (364 aa).

The Proton acceptor role is filled by glutamate 107. Positions 113-346 constitute a Radical SAM core domain; it reads HDYGNSVCVT…ATIRREQGSD (234 aa). The cysteines at positions 120 and 351 are disulfide-linked. Positions 127, 131, and 134 each coordinate [4Fe-4S] cluster. Residues 177–178, serine 209, 232–234, and asparagine 308 each bind S-adenosyl-L-methionine; these read GE and SLH. The active-site S-methylcysteine intermediate is the cysteine 351.

The protein belongs to the radical SAM superfamily. RlmN family. [4Fe-4S] cluster is required as a cofactor.

The protein resides in the cytoplasm. It catalyses the reaction adenosine(2503) in 23S rRNA + 2 reduced [2Fe-2S]-[ferredoxin] + 2 S-adenosyl-L-methionine = 2-methyladenosine(2503) in 23S rRNA + 5'-deoxyadenosine + L-methionine + 2 oxidized [2Fe-2S]-[ferredoxin] + S-adenosyl-L-homocysteine. The enzyme catalyses adenosine(37) in tRNA + 2 reduced [2Fe-2S]-[ferredoxin] + 2 S-adenosyl-L-methionine = 2-methyladenosine(37) in tRNA + 5'-deoxyadenosine + L-methionine + 2 oxidized [2Fe-2S]-[ferredoxin] + S-adenosyl-L-homocysteine. In terms of biological role, specifically methylates position 2 of adenine 2503 in 23S rRNA and position 2 of adenine 37 in tRNAs. Confers resistance to some classes of antibiotics. The sequence is that of Probable dual-specificity RNA methyltransferase RlmN from Staphylococcus haemolyticus (strain JCSC1435).